The primary structure comprises 761 residues: Xaa-Pro dipeptidyl-peptidase (761 aa).

Active-site charge relay system residues include Ser349, Asp469, and His499.

The protein belongs to the peptidase S15 family. Homodimer.

Its subcellular location is the cytoplasm. The enzyme catalyses Hydrolyzes Xaa-Pro-|- bonds to release unblocked, N-terminal dipeptides from substrates including Ala-Pro-|-p-nitroanilide and (sequentially) Tyr-Pro-|-Phe-Pro-|-Gly-Pro-|-Ile.. Functionally, removes N-terminal dipeptides sequentially from polypeptides having unsubstituted N-termini provided that the penultimate residue is proline. This is Xaa-Pro dipeptidyl-peptidase from Streptococcus equi subsp. zooepidemicus (strain H70).